Here is a 295-residue protein sequence, read N- to C-terminus: ATP synthase gamma chain (295 aa).

It belongs to the ATPase gamma chain family. F-type ATPases have 2 components, CF(1) - the catalytic core - and CF(0) - the membrane proton channel. CF(1) has five subunits: alpha(3), beta(3), gamma(1), delta(1), epsilon(1). CF(0) has three main subunits: a, b and c.

The protein localises to the cell inner membrane. Functionally, produces ATP from ADP in the presence of a proton gradient across the membrane. The gamma chain is believed to be important in regulating ATPase activity and the flow of protons through the CF(0) complex. This Campylobacter fetus subsp. fetus (strain 82-40) protein is ATP synthase gamma chain.